The sequence spans 1072 residues: Integrin alpha-6 (1072 aa).

The N-terminal stretch at 1 to 18 is a signal peptide; sequence MAAALLLYLPLLPGLAGA. Residues 19-1010 are Extracellular-facing; that stretch reads FNLDAENVIG…FPAKPVALYT (992 aa). 7 FG-GAP repeats span residues 23–88, 94–160, 170–223, 238–295, 296–357, 358–413, and 414–476; these read AENV…DTRC, DEDT…IKDD, DGRL…FYDL, RQDK…QRAL, SLEH…KWEG, IKPI…GINT, and EPAQ…VQPD. An N-linked (GlcNAc...) asparagine glycan is attached at asparagine 71. 3 cysteine pairs are disulfide-bonded: cysteine 79-cysteine 88, cysteine 125-cysteine 148, and cysteine 169-cysteine 182. N-linked (GlcNAc...) asparagine glycosylation is found at asparagine 217 and asparagine 278. 4 residues coordinate Ca(2+): aspartate 318, asparagine 320, aspartate 322, and aspartate 326. A glycan (N-linked (GlcNAc...) asparagine) is linked at asparagine 364. Aspartate 380, asparagine 382, aspartate 384, tyrosine 386, aspartate 388, aspartate 438, aspartate 440, asparagine 442, tyrosine 444, and aspartate 446 together coordinate Ca(2+). Cysteine 498 and cysteine 557 are disulfide-bonded. Residues asparagine 515 and asparagine 609 are each glycosylated (N-linked (GlcNAc...) asparagine). Intrachain disulfides connect cysteine 625-cysteine 631 and cysteine 725-cysteine 736. 3 N-linked (GlcNAc...) asparagine glycosylation sites follow: asparagine 730, asparagine 747, and asparagine 780. Disulfide bonds link cysteine 880/cysteine 927 and cysteine 933/cysteine 938. Residue asparagine 957 is glycosylated (N-linked (GlcNAc...) asparagine). The chain crosses the membrane as a helical span at residues 1011–1036; it reads GVPWWIIAVAIFAGVLMLALLVFLLW. Topologically, residues 1037–1072 are cytoplasmic; the sequence is KCGFFKRSKKDHYDATYHKAEIHAQPSDKERLTSDA. The S-palmitoyl cysteine; by DHHC3 moiety is linked to residue cysteine 1038. A GFFKR motif motif is present at residues 1039 to 1043; it reads GFFKR. Position 1070 is a phosphoserine; by CaMK2 (serine 1070).

The protein belongs to the integrin alpha chain family. In terms of assembly, heterodimer of an alpha and a beta subunit. The alpha subunit is composed of a heavy and a light chain linked by a disulfide bond. Alpha-6 associates with either beta-1 (ITGB1) or beta-4 (ITGB4) to form ITGA6:ITGB1 and ITGA6:ITGB4, respectively. Phosphorylated in vivo.

The protein resides in the cell membrane. Integrin alpha-6/beta-1 (ITGA6:ITGB1) is a receptor for laminin on platelets. Integrin alpha-6/beta-1 (ITGA6:ITGB1) is present in oocytes and is involved in sperm-egg fusion. Integrin alpha-6/beta-4 (ITGA6:ITGB4) is a receptor for laminin in epithelial cells and it plays a critical structural role in the hemidesmosome. The chain is Integrin alpha-6 (ITGA6) from Gallus gallus (Chicken).